Reading from the N-terminus, the 200-residue chain is Transcription elongation factor A protein-like 5 (200 aa).

Basic and acidic residues-rich tracts occupy residues 1–49 (MEKF…KLEV), 61–85 (GEGK…KPDS), 94–106 (RAAE…DYVP), 114–153 (DRGT…EELR), and 190–200 (GQKDLEDAPFV). The interval 1-200 (MEKFYKENEG…QKDLEDAPFV (200 aa)) is disordered.

Belongs to the TFS-II family. TFA subfamily.

It is found in the nucleus. Its function is as follows. May be involved in transcriptional regulation. In Mus musculus (Mouse), this protein is Transcription elongation factor A protein-like 5 (Tceal5).